Consider the following 545-residue polypeptide: T-complex protein 1 subunit gamma (545 aa).

Met-1 is modified (N-acetylmethionine). Residues 1–24 are disordered; the sequence is MMGHRPVLVLSQNTKRESGRKVQS. A Phosphoserine modification is found at Ser-11. Lys-15 is covalently cross-linked (Glycyl lysine isopeptide (Lys-Gly) (interchain with G-Cter in SUMO2)). Gly-42 contributes to the ADP binding site. Position 42 (Gly-42) interacts with ATP. Asp-93 contributes to the Mg(2+) binding site. Residues Gly-94, Thr-95, Thr-96, Ser-97, Thr-162, and Lys-163 each coordinate ADP. 3 residues coordinate ATP: Gly-94, Thr-95, and Thr-96. Ser-170 carries the post-translational modification Phosphoserine. Lys-222 is modified (N6-acetyllysine). A phosphoserine mark is found at Ser-243 and Ser-244. Tyr-247 carries the phosphotyrosine modification. Glycyl lysine isopeptide (Lys-Gly) (interchain with G-Cter in SUMO2) cross-links involve residues Lys-248 and Lys-249. Ser-252 is modified (phosphoserine). Cys-366 and Cys-372 are disulfide-bonded. Lys-381 participates in a covalent cross-link: Glycyl lysine isopeptide (Lys-Gly) (interchain with G-Cter in SUMO2). ADP is bound at residue Gly-411. Residue Gly-411 participates in ATP binding. Residues Thr-430 and Thr-459 each carry the phosphothreonine modification. ADP is bound by residues Gly-482, Glu-483, Glu-497, and Lys-502. Position 482 (Gly-482) interacts with ATP. Position 497 (Glu-497) interacts with ATP. Positions 526–545 are disordered; it reads HKKKGDDQSRQGGAPDAGQE.

This sequence belongs to the TCP-1 chaperonin family. Component of the chaperonin-containing T-complex (TRiC), a hexadecamer composed of two identical back-to-back stacked rings enclosing a protein folding chamber. Each ring is made up of eight different subunits: TCP1/CCT1, CCT2, CCT3, CCT4, CCT5, CCT6A/CCT6, CCT7, CCT8. Interacts with PACRG. Interacts with DNAAF4. Interacts with DLEC1.

The protein localises to the cytoplasm. It carries out the reaction ATP + H2O = ADP + phosphate + H(+). Functionally, component of the chaperonin-containing T-complex (TRiC), a molecular chaperone complex that assists the folding of actin, tubulin and other proteins upon ATP hydrolysis. The TRiC complex mediates the folding of WRAP53/TCAB1, thereby regulating telomere maintenance. As part of the TRiC complex may play a role in the assembly of BBSome, a complex involved in ciliogenesis regulating transports vesicles to the cilia. The protein is T-complex protein 1 subunit gamma (CCT3) of Bos taurus (Bovine).